A 287-amino-acid polypeptide reads, in one-letter code: Bifunctional protein FolD (287 aa).

NADP(+) contacts are provided by residues 165 to 167 (GRS), Ser-190, and Ile-231.

Belongs to the tetrahydrofolate dehydrogenase/cyclohydrolase family. As to quaternary structure, homodimer.

It catalyses the reaction (6R)-5,10-methylene-5,6,7,8-tetrahydrofolate + NADP(+) = (6R)-5,10-methenyltetrahydrofolate + NADPH. It carries out the reaction (6R)-5,10-methenyltetrahydrofolate + H2O = (6R)-10-formyltetrahydrofolate + H(+). Its pathway is one-carbon metabolism; tetrahydrofolate interconversion. Functionally, catalyzes the oxidation of 5,10-methylenetetrahydrofolate to 5,10-methenyltetrahydrofolate and then the hydrolysis of 5,10-methenyltetrahydrofolate to 10-formyltetrahydrofolate. In Carboxydothermus hydrogenoformans (strain ATCC BAA-161 / DSM 6008 / Z-2901), this protein is Bifunctional protein FolD.